The sequence spans 110 residues: Large ribosomal subunit protein uL22 (110 aa).

Belongs to the universal ribosomal protein uL22 family. In terms of assembly, part of the 50S ribosomal subunit.

Its function is as follows. This protein binds specifically to 23S rRNA; its binding is stimulated by other ribosomal proteins, e.g. L4, L17, and L20. It is important during the early stages of 50S assembly. It makes multiple contacts with different domains of the 23S rRNA in the assembled 50S subunit and ribosome. The globular domain of the protein is located near the polypeptide exit tunnel on the outside of the subunit, while an extended beta-hairpin is found that lines the wall of the exit tunnel in the center of the 70S ribosome. The chain is Large ribosomal subunit protein uL22 from Cellvibrio japonicus (strain Ueda107) (Pseudomonas fluorescens subsp. cellulosa).